We begin with the raw amino-acid sequence, 213 residues long: RNA chaperone ProQ (213 aa).

Residues 105-150 form a disordered region; the sequence is ESQEKAKAKRAAQTPKAAPAGKAPAKKAPKKVAVPARKTERPAKAA. Over residues 115–127 the composition is skewed to low complexity; sequence AAQTPKAAPAGKA.

The protein belongs to the ProQ family.

It localises to the cytoplasm. Functionally, RNA chaperone with significant RNA binding, RNA strand exchange and RNA duplexing activities. This Shewanella oneidensis (strain ATCC 700550 / JCM 31522 / CIP 106686 / LMG 19005 / NCIMB 14063 / MR-1) protein is RNA chaperone ProQ.